The chain runs to 290 residues: Protein CREG2 (290 aa).

A signal peptide spans 1–31 (MSVRRGRRPARPGTRLSWLLCCSALLSPAAG). Residues Asn165 and Asn166 are each glycosylated (N-linked (GlcNAc...) asparagine).

Belongs to the CREG family. It is not sure whether N-glycosylation is on Asn-165 and/or Asn-166. In terms of tissue distribution, brain specific mainly in the limbic system and faintly in the spinal cord but not in cerebellum.

It is found in the secreted. The polypeptide is Protein CREG2 (CREG2) (Homo sapiens (Human)).